Reading from the N-terminus, the 395-residue chain is DNA polymerase IV (395 aa).

Residues 7–187 (FFHVDIDAFF…LPLKDVWGVG (181 aa)) enclose the UmuC domain. Mg(2+) is bound by residues aspartate 11 and aspartate 105. Glutamate 106 is a catalytic residue.

The protein belongs to the DNA polymerase type-Y family. In terms of assembly, monomer. It depends on Mg(2+) as a cofactor.

It localises to the cytoplasm. The catalysed reaction is DNA(n) + a 2'-deoxyribonucleoside 5'-triphosphate = DNA(n+1) + diphosphate. Poorly processive, error-prone DNA polymerase involved in untargeted mutagenesis. Copies undamaged DNA at stalled replication forks, which arise in vivo from mismatched or misaligned primer ends. These misaligned primers can be extended by PolIV. Exhibits no 3'-5' exonuclease (proofreading) activity. May be involved in translesional synthesis, in conjunction with the beta clamp from PolIII. The protein is DNA polymerase IV of Treponema denticola (strain ATCC 35405 / DSM 14222 / CIP 103919 / JCM 8153 / KCTC 15104).